The primary structure comprises 542 residues: Phosphoenolpyruvate carboxykinase (ATP) (542 aa).

Substrate-binding residues include R67, Y208, and K214. Residues K214, H233, and 249 to 257 each bind ATP; that span reads GLSGTGKTT. Mn(2+) contacts are provided by K214 and H233. D270 provides a ligand contact to Mn(2+). ATP is bound by residues E298, R334, 450-451, and T456; that span reads RI. R334 contacts substrate.

It belongs to the phosphoenolpyruvate carboxykinase (ATP) family. Monomer. It depends on Mn(2+) as a cofactor.

The protein localises to the cytoplasm. It carries out the reaction oxaloacetate + ATP = phosphoenolpyruvate + ADP + CO2. Its pathway is carbohydrate biosynthesis; gluconeogenesis. Involved in the gluconeogenesis. Catalyzes the conversion of oxaloacetate (OAA) to phosphoenolpyruvate (PEP) through direct phosphoryl transfer between the nucleoside triphosphate and OAA. The chain is Phosphoenolpyruvate carboxykinase (ATP) from Vibrio vulnificus (strain YJ016).